A 265-amino-acid polypeptide reads, in one-letter code: NAD-capped RNA hydrolase NudC (265 aa).

Arg76 contributes to the substrate binding site. Positions 106, 109, 124, and 127 each coordinate Zn(2+). Residue Tyr132 participates in substrate binding. The 124-residue stretch at 133 to 256 (PRISPAMMVL…SIAHRLIRHA (124 aa)) folds into the Nudix hydrolase domain. The a divalent metal cation site is built by Ala166, Glu182, and Glu186. The Nudix box signature appears at 167-188 (GFVEPGETLEECVHRETWEEVG). Residue 200 to 207 (QSWPFPHS) coordinates substrate. Position 227 (Glu227) interacts with a divalent metal cation. Ala249 serves as a coordination point for substrate.

The protein belongs to the Nudix hydrolase family. NudC subfamily. Homodimer. Mg(2+) is required as a cofactor. Mn(2+) serves as cofactor. It depends on Zn(2+) as a cofactor.

The catalysed reaction is a 5'-end NAD(+)-phospho-ribonucleoside in mRNA + H2O = a 5'-end phospho-adenosine-phospho-ribonucleoside in mRNA + beta-nicotinamide D-ribonucleotide + 2 H(+). It carries out the reaction NAD(+) + H2O = beta-nicotinamide D-ribonucleotide + AMP + 2 H(+). The enzyme catalyses NADH + H2O = reduced beta-nicotinamide D-ribonucleotide + AMP + 2 H(+). In terms of biological role, mRNA decapping enzyme that specifically removes the nicotinamide adenine dinucleotide (NAD) cap from a subset of mRNAs by hydrolyzing the diphosphate linkage to produce nicotinamide mononucleotide (NMN) and 5' monophosphate mRNA. The NAD-cap is present at the 5'-end of some mRNAs and stabilizes RNA against 5'-processing. Has preference for mRNAs with a 5'-end purine. Catalyzes the hydrolysis of a broad range of dinucleotide pyrophosphates. The protein is NAD-capped RNA hydrolase NudC of Chromobacterium violaceum (strain ATCC 12472 / DSM 30191 / JCM 1249 / CCUG 213 / NBRC 12614 / NCIMB 9131 / NCTC 9757 / MK).